The primary structure comprises 193 residues: dTTP/UTP pyrophosphatase (193 aa).

D77 (proton acceptor) is an active-site residue.

This sequence belongs to the Maf family. YhdE subfamily. Requires a divalent metal cation as cofactor.

It localises to the cytoplasm. It catalyses the reaction dTTP + H2O = dTMP + diphosphate + H(+). The enzyme catalyses UTP + H2O = UMP + diphosphate + H(+). In terms of biological role, nucleoside triphosphate pyrophosphatase that hydrolyzes dTTP and UTP. May have a dual role in cell division arrest and in preventing the incorporation of modified nucleotides into cellular nucleic acids. This Bacteroides thetaiotaomicron (strain ATCC 29148 / DSM 2079 / JCM 5827 / CCUG 10774 / NCTC 10582 / VPI-5482 / E50) protein is dTTP/UTP pyrophosphatase.